A 190-amino-acid polypeptide reads, in one-letter code: Putative transcription factor ovo-like protein 3 (190 aa).

2 disordered regions span residues 1–21 (MPRA…GHLP) and 35–65 (SLGG…SAPR). Residues 41-62 (AQQSSSVRDPWTAQPTQGNLTS) show a composition bias toward polar residues. 4 consecutive C2H2-type zinc fingers follow at residues 70 to 92 (LGCP…LKCH), 98 to 120 (HLCR…MRTH), 126 to 149 (FRCS…AKVH), and 165 to 187 (HVCE…RALH).

Belongs to the krueppel C2H2-type zinc-finger protein family.

Its subcellular location is the nucleus. Its function is as follows. May act as a transcription regulator. This is Putative transcription factor ovo-like protein 3 (OVOL3) from Homo sapiens (Human).